The chain runs to 400 residues: Argininosuccinate synthase (400 aa).

Position 10-18 (10-18 (AFSGGLDTT)) interacts with ATP. An L-citrulline-binding site is contributed by tyrosine 87. Glycine 117 is an ATP binding site. The L-aspartate site is built by threonine 119, asparagine 123, and aspartate 124. L-citrulline is bound at residue asparagine 123. Residues arginine 127, serine 173, serine 182, glutamate 255, and tyrosine 267 each contribute to the L-citrulline site.

It belongs to the argininosuccinate synthase family. Type 1 subfamily. Homotetramer.

It localises to the cytoplasm. The catalysed reaction is L-citrulline + L-aspartate + ATP = 2-(N(omega)-L-arginino)succinate + AMP + diphosphate + H(+). The protein operates within amino-acid biosynthesis; L-arginine biosynthesis; L-arginine from L-ornithine and carbamoyl phosphate: step 2/3. This Natronomonas pharaonis (strain ATCC 35678 / DSM 2160 / CIP 103997 / JCM 8858 / NBRC 14720 / NCIMB 2260 / Gabara) (Halobacterium pharaonis) protein is Argininosuccinate synthase.